Here is a 342-residue protein sequence, read N- to C-terminus: Tryptophan--tRNA ligase (342 aa).

Residues 19–21 and 27–28 each bind ATP; these read QPS and GN. The short motif at 20-28 is the 'HIGH' region element; the sequence is PSGELTIGN. Residue Asp-143 participates in L-tryptophan binding. ATP is bound by residues 155–157, Val-194, and 203–207; these read GED and KMSKS. The 'KMSKS' region signature appears at 203–207; sequence KMSKS.

Belongs to the class-I aminoacyl-tRNA synthetase family. As to quaternary structure, homodimer.

It localises to the cytoplasm. It carries out the reaction tRNA(Trp) + L-tryptophan + ATP = L-tryptophyl-tRNA(Trp) + AMP + diphosphate + H(+). Functionally, catalyzes the attachment of tryptophan to tRNA(Trp). This is Tryptophan--tRNA ligase from Yersinia pestis.